A 161-amino-acid chain; its full sequence is UPF0225 protein NTHI0386 (161 aa).

It belongs to the UPF0225 family.

This Haemophilus influenzae (strain 86-028NP) protein is UPF0225 protein NTHI0386.